A 31-amino-acid polypeptide reads, in one-letter code: Cliotide T13 (31 aa).

The cyclopeptide (Asp-Asn) cross-link spans 1-31; sequence DTTPCGESCVWIPCVSSIVGCSCQNKVCYQN. 3 cysteine pairs are disulfide-bonded: C5–C21, C9–C23, and C14–C28.

In terms of processing, contains 3 disulfide bonds. This is a cyclic peptide. Expressed in seed but not in root nodules.

Functionally, probably participates in a plant defense mechanism. Not active against Gram-negative bacterium E.coli ATCC 700926 or Gram-positive bacterium S.aureus ATCC 12600 up to a concentration of 100 uM under low-salt conditions. This is Cliotide T13 from Clitoria ternatea (Butterfly pea).